A 674-amino-acid chain; its full sequence is PTS system glucose-specific EIIBCA component (674 aa).

The region spanning 1–89 (MASKLTTTSQ…LKLDGMKHFA (89 aa)) is the PTS EIIB type-1 domain. The active-site Phosphocysteine intermediate; for EIIB activity is the Cys-28. One can recognise a PTS EIIC type-1 domain in the interval 117–476 (EFLSDTFRPI…DAERDEAKAQ (360 aa)). The next 10 membrane-spanning stretches (helical) occupy residues 126 to 146 (ILWALLGASLIITLLVLADTF), 162 to 182 (YVFLHSMWRSVFYFLPIMVGA), 193 to 213 (WIGAAIPAALLTPEFLALGSA), 225 to 245 (VLNDYSGQVFPPLIAAIGLYW), 260 to 280 (MVFVPFFSLLIMIPATAFLLG), 303 to 323 (FILSIVIPLLYPFLVPLGLHW), 344 to 364 (PMGAWNFACFGLVTGVFLIAL), 376 to 396 (LGGMLAGLLGGISEPSLYGVL), 409 to 429 (GCLVGGIVMGIFDIKAYAFVF), and 442 to 462 (LGYTVGIAAAFFTSMLLVLFF). A PTS EIIA type-1 domain is found at 542–646 (DPIFAAGKLG…PLITPVVVSN (105 aa)). The active-site Tele-phosphohistidine intermediate; for EIIA activity is the His-594.

The protein resides in the cell membrane. The catalysed reaction is N(pros)-phospho-L-histidyl-[protein] + D-glucose(out) = D-glucose 6-phosphate(in) + L-histidyl-[protein]. The phosphoenolpyruvate-dependent sugar phosphotransferase system (sugar PTS), a major carbohydrate active transport system, catalyzes the phosphorylation of incoming sugar substrates concomitantly with their translocation across the cell membrane. This system is involved in glucose transport. In Corynebacterium glutamicum (Brevibacterium saccharolyticum), this protein is PTS system glucose-specific EIIBCA component (ptsG).